Here is a 325-residue protein sequence, read N- to C-terminus: MATVRKAFPQRLVGLASLRAASTSSMGTLPKRVKIVEVGPRDGLQNEKSIVPTPVKIKLIDMLSEAGLPVIEATSFVSPKWVPQMADHSDVLKGIQKFPGINYPVLTPNMKGFEEAVAAGAKEVSIFGAASELFTRKNVNCSIEESFQRFDGVMQAARAASISVRGYVSCALGCPYEGKVSPAKVAEVAKKLYSMGCYEISLGDTIGVGTPGLMKDMLTAVLHEVPVAALAVHCHDTYGQALANTLVALQMGVSVVDSSVAGLGGCPYAKGASGNLATEDLVYMLTGLGIHTGVNLQKLLEAGDFICQALNRKTSSKVAQATCKL.

A mitochondrion-targeting transit peptide spans 1 to 27 (MATVRKAFPQRLVGLASLRAASTSSMG). The Pyruvate carboxyltransferase domain occupies 33–300 (VKIVEVGPRD…HTGVNLQKLL (268 aa)). Arg41 is a binding site for substrate. Asp42 lines the a divalent metal cation pocket. Lys48 bears the N6-acetyllysine; alternate mark. Lys48 carries the N6-succinyllysine; alternate modification. Position 111 is an N6-acetyllysine (Lys111). N6-acetyllysine; alternate occurs at positions 137 and 179. Residues Lys137 and Lys179 each carry the N6-succinyllysine; alternate modification. Residues His233 and His235 each coordinate a divalent metal cation. The active site involves Cys266. An a divalent metal cation-binding site is contributed by Asn275. A Microbody targeting signal motif is present at residues 323–325 (CKL). An N6-acetyllysine modification is found at Lys324.

Belongs to the HMG-CoA lyase family. In terms of assembly, homodimer; disulfide-linked. Can also form homotetramers. As to expression, in suckling rat, highest levels in liver and in intestine. Lower levels in heart, kidney and cerebellum. Weak expression in brain cortex, medulla and midbrain. Levels decrease slightly during weaning.

The protein localises to the mitochondrion matrix. It is found in the peroxisome. The catalysed reaction is (3S)-3-hydroxy-3-methylglutaryl-CoA = acetoacetate + acetyl-CoA. The protein operates within metabolic intermediate metabolism; (S)-3-hydroxy-3-methylglutaryl-CoA degradation; acetoacetate from (S)-3-hydroxy-3-methylglutaryl-CoA: step 1/1. Mitochondrial 3-hydroxy-3-methylglutaryl-CoA lyase that catalyzes a cation-dependent cleavage of (S)-3-hydroxy-3-methylglutaryl-CoA into acetyl-CoA and acetoacetate, a key step in ketogenesis. Terminal step in leucine catabolism. Ketone bodies (beta-hydroxybutyrate, acetoacetate and acetone) are essential as an alternative source of energy to glucose, as lipid precursors and as regulators of metabolism. The polypeptide is Hydroxymethylglutaryl-CoA lyase, mitochondrial (Hmgcl) (Rattus norvegicus (Rat)).